We begin with the raw amino-acid sequence, 242 residues long: 2-amino-5-formylamino-6-ribosylaminopyrimidin-4(3H)-one 5'-monophosphate deformylase (242 aa).

Fe cation contacts are provided by Glu-46, His-48, Asp-57, and His-125.

The protein belongs to the creatininase superfamily. FAPy deformylase family. In terms of assembly, homodimer. The cofactor is Fe(2+). Requires Zn(2+) as cofactor.

It carries out the reaction 2-amino-5-formylamino-6-(5-phospho-D-ribosylamino)pyrimidin-4(3H)-one + H2O = 2,5-diamino-6-(1-D-ribosylamino)pyrimidin-4(3H)-one 5'-phosphate + formate + H(+). The protein operates within cofactor biosynthesis; coenzyme F420 biosynthesis. It participates in cofactor biosynthesis; riboflavin biosynthesis. Catalyzes the hydrolysis of the formamide of 2-amino-5-formylamino-6-ribosylamino-4(3H)-pyrimidinone 5'-monophosphate (FAPy) to form 2,5-diamino-6-ribosylamino-4(3H)-pyrimidinone 5'-phosphate (APy). The polypeptide is 2-amino-5-formylamino-6-ribosylaminopyrimidin-4(3H)-one 5'-monophosphate deformylase (Methanococcus aeolicus (strain ATCC BAA-1280 / DSM 17508 / OCM 812 / Nankai-3)).